Here is a 119-residue protein sequence, read N- to C-terminus: Ribonuclease P protein component (119 aa).

It belongs to the RnpA family. As to quaternary structure, consists of a catalytic RNA component (M1 or rnpB) and a protein subunit.

It carries out the reaction Endonucleolytic cleavage of RNA, removing 5'-extranucleotides from tRNA precursor.. In terms of biological role, RNaseP catalyzes the removal of the 5'-leader sequence from pre-tRNA to produce the mature 5'-terminus. It can also cleave other RNA substrates such as 4.5S RNA. The protein component plays an auxiliary but essential role in vivo by binding to the 5'-leader sequence and broadening the substrate specificity of the ribozyme. This Halalkalibacterium halodurans (strain ATCC BAA-125 / DSM 18197 / FERM 7344 / JCM 9153 / C-125) (Bacillus halodurans) protein is Ribonuclease P protein component.